Reading from the N-terminus, the 462-residue chain is MTRQNENYNRYLLSDWRPENPAFWENKGKGIARRNLWISVSCLLLAFCVWMLFSAVAVNLNKIGFNFTTDQLFLLTALPSLSGAILRVPYSFMVPLFGGRKWTVLSTVILIIPCAWLGFAVQNPATPFGVFMLIALLCGFAGANFASSMGNISFFFPKARQGSALGINGGLGNLGVSVMQLIAPLVIFLPIFTFLGVQGVPQPDGSLLALTNAAWIWVPLLAVATLAAWFGMNDIGSSKASVASQLPVLKRLHLWLLSLLYLATFGSFIGFSAGFAMLAKTQFPDVNILQLAFFGPFIGALARSAGGVISDKFGGVRVTLINFIFMALFTALLFLTLPGSGAGSFSAFYLVFMGLFLTAGLGSGSTFQMIAVIFRQITLYNVKLRGGSDEQAQREAVTDTAAALGFISAIGAVGGFFIPKAFGTSLALTGSPVGAMKIFLLFYLACVLLTWLVYGRRKPKQQ.

Residues M1 to N35 are Cytoplasmic-facing. The chain crosses the membrane as a helical span at residues L36 to V56. Topologically, residues A57–Q71 are periplasmic. The helical transmembrane segment at L72–F92 threads the bilayer. Residues M93–K101 lie on the Cytoplasmic side of the membrane. Residues W102–Q122 traverse the membrane as a helical segment. Topologically, residues N123 to P124 are periplasmic. The helical transmembrane segment at A125–F145 threads the bilayer. Over A146–Q180 the chain is Cytoplasmic. The chain crosses the membrane as a helical span at residues L181 to P201. Topologically, residues Q202–S206 are periplasmic. A helical transmembrane segment spans residues L207 to A227. Topologically, residues A228 to S258 are cytoplasmic. A helical membrane pass occupies residues L259–A279. Residues K280–N287 lie on the Periplasmic side of the membrane. The chain crosses the membrane as a helical span at residues I288–V308. The Cytoplasmic portion of the chain corresponds to I309–R317. A helical membrane pass occupies residues V318–P338. The Periplasmic segment spans residues G339–G341. A helical transmembrane segment spans residues A342–G362. Topologically, residues S363 to A401 are cytoplasmic. The chain crosses the membrane as a helical span at residues A402–F422. The Periplasmic portion of the chain corresponds to G423–P432. The helical transmembrane segment at V433–V453 threads the bilayer. The Cytoplasmic segment spans residues Y454–Q462.

This sequence belongs to the major facilitator superfamily. Nitrate/nitrite porter (TC 2.A.1.8) family.

Its subcellular location is the cell inner membrane. In terms of biological role, catalyzes nitrate uptake, nitrite uptake and nitrite export across the cytoplasmic membrane. The protein is Nitrate/nitrite transporter NarU (narU) of Salmonella typhimurium (strain LT2 / SGSC1412 / ATCC 700720).